Here is a 456-residue protein sequence, read N- to C-terminus: Bifunctional protein GlmU (456 aa).

The segment at 1-229 is pyrophosphorylase; sequence MLNNAMSVVI…LSEVEGVNNR (229 aa). UDP-N-acetyl-alpha-D-glucosamine-binding positions include 11 to 14, Lys25, Gln76, 81 to 82, 103 to 105, Gly140, Glu154, Asn169, and Asn227; these read LAAG, GT, and YGD. Asp105 is a Mg(2+) binding site. Asn227 contributes to the Mg(2+) binding site. Residues 230-250 form a linker region; the sequence is LQLSRLERVYQSEQAEKLLLA. The segment at 251–456 is N-acetyltransferase; the sequence is GVMLRDPARF…EGWRRPVKKK (206 aa). UDP-N-acetyl-alpha-D-glucosamine-binding residues include Arg333 and Lys351. His363 serves as the catalytic Proton acceptor. UDP-N-acetyl-alpha-D-glucosamine-binding residues include Tyr366 and Asn377. Acetyl-CoA-binding positions include Ala380, 386–387, Ser405, Ala423, and Arg440; that span reads NY.

In the N-terminal section; belongs to the N-acetylglucosamine-1-phosphate uridyltransferase family. The protein in the C-terminal section; belongs to the transferase hexapeptide repeat family. Homotrimer. Requires Mg(2+) as cofactor.

The protein resides in the cytoplasm. It catalyses the reaction alpha-D-glucosamine 1-phosphate + acetyl-CoA = N-acetyl-alpha-D-glucosamine 1-phosphate + CoA + H(+). The catalysed reaction is N-acetyl-alpha-D-glucosamine 1-phosphate + UTP + H(+) = UDP-N-acetyl-alpha-D-glucosamine + diphosphate. It participates in nucleotide-sugar biosynthesis; UDP-N-acetyl-alpha-D-glucosamine biosynthesis; N-acetyl-alpha-D-glucosamine 1-phosphate from alpha-D-glucosamine 6-phosphate (route II): step 2/2. The protein operates within nucleotide-sugar biosynthesis; UDP-N-acetyl-alpha-D-glucosamine biosynthesis; UDP-N-acetyl-alpha-D-glucosamine from N-acetyl-alpha-D-glucosamine 1-phosphate: step 1/1. Its pathway is bacterial outer membrane biogenesis; LPS lipid A biosynthesis. Its function is as follows. Catalyzes the last two sequential reactions in the de novo biosynthetic pathway for UDP-N-acetylglucosamine (UDP-GlcNAc). The C-terminal domain catalyzes the transfer of acetyl group from acetyl coenzyme A to glucosamine-1-phosphate (GlcN-1-P) to produce N-acetylglucosamine-1-phosphate (GlcNAc-1-P), which is converted into UDP-GlcNAc by the transfer of uridine 5-monophosphate (from uridine 5-triphosphate), a reaction catalyzed by the N-terminal domain. The chain is Bifunctional protein GlmU from Shigella boydii serotype 4 (strain Sb227).